Consider the following 262-residue polypeptide: MLELLPTAVEGVSQAQITGRPEWIWLALGTALMGLGTLYFLVKGMGVSDPDAKKFYAITTLVPAIAFTMYLSMLLGYGLTMVPFGGEQNPIYWARYADWLFTTPLLLLDLALLVDADQGTILALVGADGIMIGTGLVGALTKVYSYRFVWWAISTAAMLYILYVLFFGFTSKAESMRPEVASTFKVLRNVTVVLWSAYPVVWLIGSEGAGIVPLNIETLLFMVLDVSAKVGFGLILLRSRAIFGEAEAPEPSAGDGAAATSD.

The propeptide occupies 1 to 13 (MLELLPTAVEGVS). Pyrrolidone carboxylic acid is present on Gln14. Residues 14 to 22 (QAQITGRPE) lie on the Extracellular side of the membrane. A helical membrane pass occupies residues 23–42 (WIWLALGTALMGLGTLYFLV). Residues 43–56 (KGMGVSDPDAKKFY) lie on the Cytoplasmic side of the membrane. Residues 57-75 (AITTLVPAIAFTMYLSMLL) form a helical membrane-spanning segment. Over 76–92 (GYGLTMVPFGGEQNPIY) the chain is Extracellular. The chain crosses the membrane as a helical span at residues 93–109 (WARYADWLFTTPLLLLD). Topologically, residues 110–120 (LALLVDADQGT) are cytoplasmic. Residues 121 to 140 (ILALVGADGIMIGTGLVGAL) form a helical membrane-spanning segment. Topologically, residues 141–147 (TKVYSYR) are extracellular. The chain crosses the membrane as a helical span at residues 148–167 (FVWWAISTAAMLYILYVLFF). At 168-185 (GFTSKAESMRPEVASTFK) the chain is on the cytoplasmic side. Residues 186-204 (VLRNVTVVLWSAYPVVWLI) traverse the membrane as a helical segment. The Extracellular portion of the chain corresponds to 205–216 (GSEGAGIVPLNI). Residues 217-236 (ETLLFMVLDVSAKVGFGLIL) traverse the membrane as a helical segment. The residue at position 229 (Lys229) is an N6-(retinylidene)lysine. At 237-262 (LRSRAIFGEAEAPEPSAGDGAAATSD) the chain is on the cytoplasmic side.

In terms of assembly, homotrimer. Post-translationally, the covalent binding of retinal to the apoprotein, bacterioopsin, generates bacteriorhodopsin.

It is found in the cell membrane. Its function is as follows. Light-driven proton pump. The polypeptide is Bacteriorhodopsin (bop) (Halobacterium salinarum (strain ATCC 700922 / JCM 11081 / NRC-1) (Halobacterium halobium)).